A 632-amino-acid polypeptide reads, in one-letter code: Phosphomethylpyrimidine synthase (632 aa).

The span at 1–23 shows a compositional bias: polar residues; the sequence is MNIRSNPQQTVPAVTTGPLSSSR. Positions 1-26 are disordered; it reads MNIRSNPQQTVPAVTTGPLSSSRKIF. Residues Asn-221, Met-250, Tyr-279, His-315, 335–337, 376–379, and Glu-415 each bind substrate; these read SRG and DGLR. His-419 is a binding site for Zn(2+). Substrate is bound at residue Tyr-442. His-483 is a binding site for Zn(2+). Positions 563, 566, and 571 each coordinate [4Fe-4S] cluster.

The protein belongs to the ThiC family. As to quaternary structure, homodimer. [4Fe-4S] cluster is required as a cofactor.

It catalyses the reaction 5-amino-1-(5-phospho-beta-D-ribosyl)imidazole + S-adenosyl-L-methionine = 4-amino-2-methyl-5-(phosphooxymethyl)pyrimidine + CO + 5'-deoxyadenosine + formate + L-methionine + 3 H(+). The protein operates within cofactor biosynthesis; thiamine diphosphate biosynthesis. Catalyzes the synthesis of the hydroxymethylpyrimidine phosphate (HMP-P) moiety of thiamine from aminoimidazole ribotide (AIR) in a radical S-adenosyl-L-methionine (SAM)-dependent reaction. This is Phosphomethylpyrimidine synthase from Bradyrhizobium diazoefficiens (strain JCM 10833 / BCRC 13528 / IAM 13628 / NBRC 14792 / USDA 110).